The primary structure comprises 350 residues: UDP-3-O-acylglucosamine N-acyltransferase (350 aa).

The Proton acceptor role is filled by histidine 251.

It belongs to the transferase hexapeptide repeat family. LpxD subfamily. As to quaternary structure, homotrimer.

It carries out the reaction a UDP-3-O-[(3R)-3-hydroxyacyl]-alpha-D-glucosamine + a (3R)-hydroxyacyl-[ACP] = a UDP-2-N,3-O-bis[(3R)-3-hydroxyacyl]-alpha-D-glucosamine + holo-[ACP] + H(+). It functions in the pathway bacterial outer membrane biogenesis; LPS lipid A biosynthesis. Functionally, catalyzes the N-acylation of UDP-3-O-acylglucosamine using 3-hydroxyacyl-ACP as the acyl donor. Is involved in the biosynthesis of lipid A, a phosphorylated glycolipid that anchors the lipopolysaccharide to the outer membrane of the cell. In Prochlorococcus marinus (strain NATL2A), this protein is UDP-3-O-acylglucosamine N-acyltransferase.